The sequence spans 304 residues: Acetyl-coenzyme A carboxylase carboxyl transferase subunit beta (304 aa).

The CoA carboxyltransferase N-terminal domain occupies 25 to 294 (LWIKCPETGE…KAVKRDTATE (270 aa)).

The protein belongs to the AccD/PCCB family. As to quaternary structure, acetyl-CoA carboxylase is a heterohexamer composed of biotin carboxyl carrier protein (AccB), biotin carboxylase (AccC) and two subunits each of ACCase subunit alpha (AccA) and ACCase subunit beta (AccD).

The protein resides in the cytoplasm. The enzyme catalyses N(6)-carboxybiotinyl-L-lysyl-[protein] + acetyl-CoA = N(6)-biotinyl-L-lysyl-[protein] + malonyl-CoA. It participates in lipid metabolism; malonyl-CoA biosynthesis; malonyl-CoA from acetyl-CoA: step 1/1. In terms of biological role, component of the acetyl coenzyme A carboxylase (ACC) complex. Biotin carboxylase (BC) catalyzes the carboxylation of biotin on its carrier protein (BCCP) and then the CO(2) group is transferred by the transcarboxylase to acetyl-CoA to form malonyl-CoA. This Rhizobium meliloti (strain 1021) (Ensifer meliloti) protein is Acetyl-coenzyme A carboxylase carboxyl transferase subunit beta.